A 641-amino-acid chain; its full sequence is Phosphomethylpyrimidine synthase (641 aa).

Residues N221, M250, Y279, H315, 335–337 (SRG), 376–379 (DGLR), and E415 contribute to the substrate site. Zn(2+) is bound at residue H419. Y442 lines the substrate pocket. Residue H483 coordinates Zn(2+). [4Fe-4S] cluster is bound by residues C563, C566, and C571.

It belongs to the ThiC family. In terms of assembly, homodimer. It depends on [4Fe-4S] cluster as a cofactor.

It catalyses the reaction 5-amino-1-(5-phospho-beta-D-ribosyl)imidazole + S-adenosyl-L-methionine = 4-amino-2-methyl-5-(phosphooxymethyl)pyrimidine + CO + 5'-deoxyadenosine + formate + L-methionine + 3 H(+). Its pathway is cofactor biosynthesis; thiamine diphosphate biosynthesis. Catalyzes the synthesis of the hydroxymethylpyrimidine phosphate (HMP-P) moiety of thiamine from aminoimidazole ribotide (AIR) in a radical S-adenosyl-L-methionine (SAM)-dependent reaction. This Rhodopseudomonas palustris (strain BisA53) protein is Phosphomethylpyrimidine synthase.